A 276-amino-acid chain; its full sequence is NADPH-dependent 7-cyano-7-deazaguanine reductase (276 aa).

Residue 83–85 (VES) coordinates substrate. 85-86 (SK) contacts NADPH. Cys-184 functions as the Thioimide intermediate in the catalytic mechanism. Asp-191 functions as the Proton donor in the catalytic mechanism. 223–224 (HE) contacts substrate. 252-253 (RG) serves as a coordination point for NADPH.

It belongs to the GTP cyclohydrolase I family. QueF type 2 subfamily. Homodimer.

The protein resides in the cytoplasm. It catalyses the reaction 7-aminomethyl-7-carbaguanine + 2 NADP(+) = 7-cyano-7-deazaguanine + 2 NADPH + 3 H(+). It participates in tRNA modification; tRNA-queuosine biosynthesis. In terms of biological role, catalyzes the NADPH-dependent reduction of 7-cyano-7-deazaguanine (preQ0) to 7-aminomethyl-7-deazaguanine (preQ1). This Azotobacter vinelandii (strain DJ / ATCC BAA-1303) protein is NADPH-dependent 7-cyano-7-deazaguanine reductase.